Here is a 344-residue protein sequence, read N- to C-terminus: KRR1 small subunit processome component homolog (344 aa).

The KH domain maps to 125 to 193 (DIIKIGNLVH…VRDIVLETMN (69 aa)). The segment covering 232 to 245 (NISKRKQPKVKKQK) has biased composition (basic residues). Disordered stretches follow at residues 232–260 (NISK…ESKV) and 273–326 (QEQK…TKVD). Residues 270–295 (FLNQEQKQAKRNQGRTEKQKEAAKRQ) adopt a coiled-coil conformation. Basic and acidic residues-rich tracts occupy residues 283 to 302 (GRTE…RNKD) and 315 to 326 (RKKEDGSSTKVD).

The protein belongs to the KRR1 family. As to quaternary structure, monomer. Component of the ribosomal small subunit (SSU) processome.

Its subcellular location is the nucleus. It is found in the nucleolus. Its function is as follows. Required for 40S ribosome biogenesis. Involved in nucleolar processing of pre-18S ribosomal RNA and ribosome assembly. Binds to RNA. Required for female germline development, cell viability during eye development and for survival of dividing cells and epithelial cells during early wing disk development. The sequence is that of KRR1 small subunit processome component homolog from Drosophila yakuba (Fruit fly).